Here is a 195-residue protein sequence, read N- to C-terminus: Probable GTP-binding protein EngB (195 aa).

One can recognise an EngB-type G domain in the interval 22–194; that stretch reads LKGEVAFVGR…LDLISTLLKE (173 aa). GTP contacts are provided by residues 30–37, 56–60, 74–77, 141–144, and 173–175; these read GRSNVGKS, GKTRS, DLPG, TKMD, and TSS. The Mg(2+) site is built by serine 37 and threonine 58.

This sequence belongs to the TRAFAC class TrmE-Era-EngA-EngB-Septin-like GTPase superfamily. EngB GTPase family. Mg(2+) serves as cofactor.

Its function is as follows. Necessary for normal cell division and for the maintenance of normal septation. The sequence is that of Probable GTP-binding protein EngB from Thermotoga petrophila (strain ATCC BAA-488 / DSM 13995 / JCM 10881 / RKU-1).